The sequence spans 55 residues: uncharacterized protein (55 aa).

This is an uncharacterized protein from Rickettsia prowazekii (strain Madrid E).